The chain runs to 400 residues: Argininosuccinate synthase (400 aa).

10–18 (AFSGGLDTT) contacts ATP. Residue Y87 coordinates L-citrulline. G117 is a binding site for ATP. The L-aspartate site is built by T119, N123, and D124. N123 contacts L-citrulline. The L-citrulline site is built by R127, S173, S182, E255, and Y267.

It belongs to the argininosuccinate synthase family. Type 1 subfamily. In terms of assembly, homotetramer.

It is found in the cytoplasm. It catalyses the reaction L-citrulline + L-aspartate + ATP = 2-(N(omega)-L-arginino)succinate + AMP + diphosphate + H(+). It functions in the pathway amino-acid biosynthesis; L-arginine biosynthesis; L-arginine from L-ornithine and carbamoyl phosphate: step 2/3. This chain is Argininosuccinate synthase, found in Natronomonas pharaonis (strain ATCC 35678 / DSM 2160 / CIP 103997 / JCM 8858 / NBRC 14720 / NCIMB 2260 / Gabara) (Halobacterium pharaonis).